The primary structure comprises 242 residues: DNA repair protein RecO (242 aa).

Belongs to the RecO family.

In terms of biological role, involved in DNA repair and RecF pathway recombination. This chain is DNA repair protein RecO, found in Methylococcus capsulatus (strain ATCC 33009 / NCIMB 11132 / Bath).